Reading from the N-terminus, the 313-residue chain is CBK1 kinase activator protein MOB2 (313 aa).

A disordered region spans residues Met1–Ser109. A compositionally biased stretch (polar residues) spans Pro23 to Thr69. Phosphoserine; by CDC28 occurs at positions 44, 51, 67, and 97. Residues Gln76–Ser97 show a composition bias toward low complexity. Positions Pro98–Ser109 are enriched in polar residues.

This sequence belongs to the MOB1/phocein family. Interacts with protein kinase CBK1 to form the RAM CBK1-MOB2 kinase complex. In terms of processing, phosphorylated by CDC28 at Ser-44, Ser-51, Ser-67, and Ser-97. Phosphorylation occurs during bud emergence and is maintained until the G2/M transition. Dephosphorylated at the end of mitosis. Phosphorylation is required for the maintenance of polarisome components in hyphae.

Its subcellular location is the nucleus. It is found in the cytoplasm. Its function is as follows. Functions as an activator subunit for the CBK1 protein kinase. Part of the regulation of ACE2 activity and cellular morphogenesis (RAM) signaling network. The RAM network is critically required for hyphal growth as well as normal vegetative growth, and for polarization of lipid rafts and the actin cytoskeleton. It play an essential role in biofilm formation. The RAM network also plays a role in serum- and antifungal azoles-induced activation of ergosterol biosynthesis genes, especially those involved in the late steps of ergosterol biosynthesis. In Candida albicans (strain SC5314 / ATCC MYA-2876) (Yeast), this protein is CBK1 kinase activator protein MOB2 (MOB2).